The chain runs to 453 residues: Ribulose bisphosphate carboxylase large chain (453 aa).

Residues 1–2 (MS) constitute a propeptide that is removed on maturation. P3 bears the N-acetylproline mark. K14 carries the post-translational modification N6,N6,N6-trimethyllysine. Substrate contacts are provided by N123 and T173. The Proton acceptor role is filled by K175. Position 177 (K177) interacts with substrate. Mg(2+) is bound by residues K201, D203, and E204. K201 carries the post-translational modification N6-carboxylysine. H294 acts as the Proton acceptor in catalysis. R295, H327, and S379 together coordinate substrate.

This sequence belongs to the RuBisCO large chain family. Type I subfamily. Heterohexadecamer of 8 large chains and 8 small chains; disulfide-linked. The disulfide link is formed within the large subunit homodimers. Mg(2+) is required as a cofactor. In terms of processing, the disulfide bond which can form in the large chain dimeric partners within the hexadecamer appears to be associated with oxidative stress and protein turnover.

The protein localises to the plastid. The protein resides in the chloroplast. The catalysed reaction is 2 (2R)-3-phosphoglycerate + 2 H(+) = D-ribulose 1,5-bisphosphate + CO2 + H2O. The enzyme catalyses D-ribulose 1,5-bisphosphate + O2 = 2-phosphoglycolate + (2R)-3-phosphoglycerate + 2 H(+). RuBisCO catalyzes two reactions: the carboxylation of D-ribulose 1,5-bisphosphate, the primary event in carbon dioxide fixation, as well as the oxidative fragmentation of the pentose substrate in the photorespiration process. Both reactions occur simultaneously and in competition at the same active site. The sequence is that of Ribulose bisphosphate carboxylase large chain from Phuopsis stylosa (Caucasian crosswort).